A 141-amino-acid polypeptide reads, in one-letter code: Lutropin subunit beta (141 aa).

The signal sequence occupies residues 1–20 (MEMFQGLLLWLLLNTGGAWA). 6 disulfides stabilise this stretch: C29-C77, C43-C92, C46-C130, C54-C108, C58-C110, and C113-C120. The N-linked (GlcNAc...) asparagine glycan is linked to N33.

This sequence belongs to the glycoprotein hormones subunit beta family. Heterodimer of a common alpha chain and a unique beta chain which confers biological specificity to thyrotropin, lutropin, follitropin and gonadotropin.

Its subcellular location is the secreted. Functionally, promotes spermatogenesis and ovulation by stimulating the testes and ovaries to synthesize steroids. This is Lutropin subunit beta (LHB) from Ailuropoda melanoleuca (Giant panda).